Here is a 386-residue protein sequence, read N- to C-terminus: Cell division protein FtsZ (386 aa).

GTP contacts are provided by residues 21 to 25, 108 to 110, Glu139, Arg143, and Asn187; these read GGGGN and GTG.

It belongs to the FtsZ family. Homodimer. Polymerizes to form a dynamic ring structure in a strictly GTP-dependent manner. Interacts directly with several other division proteins.

The protein localises to the cytoplasm. Its function is as follows. Essential cell division protein that forms a contractile ring structure (Z ring) at the future cell division site. The regulation of the ring assembly controls the timing and the location of cell division. One of the functions of the FtsZ ring is to recruit other cell division proteins to the septum to produce a new cell wall between the dividing cells. Binds GTP and shows GTPase activity. The protein is Cell division protein FtsZ of Coxiella burnetii (strain RSA 493 / Nine Mile phase I).